We begin with the raw amino-acid sequence, 128 residues long: Protein yippee-like At3g08990 (128 aa).

The Yippee domain maps to 12 to 109; the sequence is LVYSCKYCQT…LERFKVLGPY (98 aa). Positions 16, 19, 72, and 75 each coordinate Zn(2+).

Belongs to the yippee family.

This Arabidopsis thaliana (Mouse-ear cress) protein is Protein yippee-like At3g08990.